The primary structure comprises 206 residues: Probable N-acetyltransferase 14 (206 aa).

The N-acetyltransferase domain occupies 9–206 (LSVREMREEE…TIVQEFRKDI (198 aa)). A run of 2 helical transmembrane segments spans residues 37 to 57 (LILY…ASSG) and 60 to 80 (FILN…IVGL).

It belongs to the camello family.

The protein localises to the membrane. In terms of biological role, probable acetyltransferase. The sequence is that of Probable N-acetyltransferase 14 (nat14) from Xenopus tropicalis (Western clawed frog).